The chain runs to 196 residues: Probable malonic semialdehyde reductase RutE (196 aa).

The protein belongs to the nitroreductase family. HadB/RutE subfamily. The cofactor is FMN.

It catalyses the reaction 3-hydroxypropanoate + NADP(+) = 3-oxopropanoate + NADPH + H(+). Its function is as follows. May reduce toxic product malonic semialdehyde to 3-hydroxypropionic acid, which is excreted. This is Probable malonic semialdehyde reductase RutE from Escherichia coli O157:H7.